The following is a 70-amino-acid chain: Cold shock-like protein CspJ (70 aa).

The 61-residue stretch at 7-67 (GLVKWFNPEK…GPKGPSAVNV (61 aa)) folds into the CSD domain.

The protein resides in the cytoplasm. In Salmonella typhi, this protein is Cold shock-like protein CspJ (cspJ).